The sequence spans 1067 residues: SURP and G-patch domain-containing protein 2 (1067 aa).

Position 93 is a phosphoserine (S93). The segment covering 177 to 189 has biased composition (basic and acidic residues); that stretch reads KESRDYDLDHPGE. The segment at 177–199 is disordered; the sequence is KESRDYDLDHPGEVDSVSRSSGQ. S206 is subject to Phosphoserine. K219 is covalently cross-linked (Glycyl lysine isopeptide (Lys-Gly) (interchain with G-Cter in SUMO2)). T265 is subject to Phosphothreonine. S267 and S586 each carry phosphoserine. The stretch at 573-616 is one SURP motif 1 repeat; the sequence is IDQLVMRVIQGRLSPRERTLLLQDPAYWFLSDESSLEYKYYKLK. The segment at 668 to 767 is disordered; that stretch reads SQGPRGLKAK…CPSANMDAKT (100 aa). Positions 680 to 691 are enriched in polar residues; that stretch reads TTAQQTSLSSGT. A Phosphoserine modification is found at S740. T744 carries the phosphothreonine modification. One copy of the SURP motif 2 repeat lies at 770–813; sequence TAEKLARFVAQVGPEIEQFSIENSTDNPDLWFLHDQSSSAFKFY. A compositionally biased stretch (polar residues) spans 825-840; it reads SFQSTGEAGDSVQSPT. 2 disordered regions span residues 825–944 and 967–991; these read SFQS…KSLK and RIAY…EFSQ. Phosphoserine is present on S838. A compositionally biased stretch (basic and acidic residues) spans 843 to 856; sequence KEGKGEPQEGHPEQ. Residues 866–883 are compositionally biased toward acidic residues; that stretch reads LPEEEEEDEEESEDEGGE. Positions 919–931 are enriched in polar residues; the sequence is ASTPGLSQASSGS. The span at 975–984 shows a compositional bias: basic residues; the sequence is GRPIAKKKKP. The Nuclear localization signal signature appears at 980-985; it reads KKKKPK. The region spanning 996–1042 is the G-patch domain; the sequence is DKNVGFQMLQKMGWKEGHGLGSLGKGIREPVSVGALSEGEGLGADGP.

The protein localises to the nucleus. Its function is as follows. May play a role in mRNA splicing. This Mus musculus (Mouse) protein is SURP and G-patch domain-containing protein 2 (Sugp2).